A 456-amino-acid chain; its full sequence is Signal transduction histidine-protein kinase ArlS (456 aa).

2 helical membrane passes run 13-33 (LITTLITFTTILLFCLIIIFF) and 157-177 (IVALAFGLIATIITAGVSYIF). The HAMP domain occupies 179–232 (SQITKPIVTMSNKMNQIRRDGFQNKLELTTNYEETDNLIDTFNEMMYQIEESFN). The 217-residue stretch at 240–456 (DASHELRTPL…TFKISFPVLN (217 aa)) folds into the Histidine kinase domain. Histidine 243 is modified (phosphohistidine; by autocatalysis).

In terms of processing, autophosphorylated.

It localises to the cell membrane. The enzyme catalyses ATP + protein L-histidine = ADP + protein N-phospho-L-histidine.. Member of the two-component regulatory system ArlS/ArlR. ArlS probably functions as a sensor protein kinase which is autophosphorylated at a histidine residue and transfers its phosphate group to ArlR. In Staphylococcus epidermidis (strain ATCC 12228 / FDA PCI 1200), this protein is Signal transduction histidine-protein kinase ArlS (arlS).